Consider the following 474-residue polypeptide: Cytochrome c-552 (474 aa).

The first 29 residues, M1–A29, serve as a signal peptide directing secretion. Position 91 (H91) interacts with heme c. Heme-binding residues include C119, C122, and K123. C157, C160, H161, C206, C209, and H210 together coordinate heme c. Residues E212, Y213, K258, and Q260 each coordinate Ca(2+). Y213 provides a ligand contact to substrate. A substrate-binding site is contributed by H261. Heme c contacts are provided by H272, C279, C282, H283, H298, C311, C314, H315, and H390.

It belongs to the cytochrome c-552 family. Ca(2+) is required as a cofactor. It depends on heme c as a cofactor.

Its subcellular location is the periplasm. It carries out the reaction 6 Fe(III)-[cytochrome c] + NH4(+) + 2 H2O = 6 Fe(II)-[cytochrome c] + nitrite + 8 H(+). The protein operates within nitrogen metabolism; nitrate reduction (assimilation). In terms of biological role, catalyzes the reduction of nitrite to ammonia, consuming six electrons in the process. In Vibrio vulnificus (strain CMCP6), this protein is Cytochrome c-552.